A 408-amino-acid polypeptide reads, in one-letter code: Succinylornithine transaminase (408 aa).

The residue at position 252 (lysine 252) is an N6-(pyridoxal phosphate)lysine.

This sequence belongs to the class-III pyridoxal-phosphate-dependent aminotransferase family. AstC subfamily. Pyridoxal 5'-phosphate is required as a cofactor.

The enzyme catalyses N(2)-succinyl-L-ornithine + 2-oxoglutarate = N-succinyl-L-glutamate 5-semialdehyde + L-glutamate. Its pathway is amino-acid degradation; L-arginine degradation via AST pathway; L-glutamate and succinate from L-arginine: step 3/5. Catalyzes the transamination of N(2)-succinylornithine and alpha-ketoglutarate into N(2)-succinylglutamate semialdehyde and glutamate. Can also act as an acetylornithine aminotransferase. The chain is Succinylornithine transaminase from Salmonella dublin (strain CT_02021853).